Consider the following 304-residue polypeptide: Dihydroorotate dehydrogenase B (NAD(+)), catalytic subunit (304 aa).

FMN contacts are provided by residues serine 22 and 46-47 (KG). Residues lysine 46 and 70–74 (NAIGL) each bind substrate. The FMN site is built by asparagine 100 and asparagine 128. Asparagine 128 provides a ligand contact to substrate. Residue cysteine 131 is the Nucleophile of the active site. FMN-binding residues include lysine 166 and isoleucine 192. Residue 193 to 194 (NT) coordinates substrate. FMN-binding positions include glycine 218, 244 to 245 (GG), and 266 to 267 (GT).

Belongs to the dihydroorotate dehydrogenase family. Type 1 subfamily. As to quaternary structure, heterotetramer of 2 PyrK and 2 PyrD type B subunits. It depends on FMN as a cofactor.

It localises to the cytoplasm. It carries out the reaction (S)-dihydroorotate + NAD(+) = orotate + NADH + H(+). It participates in pyrimidine metabolism; UMP biosynthesis via de novo pathway; orotate from (S)-dihydroorotate (NAD(+) route): step 1/1. Functionally, catalyzes the conversion of dihydroorotate to orotate with NAD(+) as electron acceptor. This Trichlorobacter lovleyi (strain ATCC BAA-1151 / DSM 17278 / SZ) (Geobacter lovleyi) protein is Dihydroorotate dehydrogenase B (NAD(+)), catalytic subunit (pyrD).